The chain runs to 634 residues: MQQELTLLDRINYPAELRNIPLEKLPQICKEVRNYIIDTLSGIGGHFASNLGVVELTVALHYVFDTPKDRLVWDVGHQTYPHKILTGRKDKLNTVRKFNGLSGFPKREESPYDLYNTGHAGTSISQALGEAAARDLVKENYNVVAIIGDASIATGMALEAMNHAGHLKKDMIVILNDNYMSISKNVGSISNYLNNIITSHFYNHWKRVFYTFLKWLPIIGPATERFFKKVEKGFKDVLTPGGLFEDLGFGYIGPEDGHDVIRLVKMLEKVKKMKGPILLHIITQKGKGYDPAERDPIKYHGVTPFRKEDGAMDSGDTSKIAYSKIVGKMLAILTETNPKIAAITPAMIEGSGLKEYAEKYPEHLFDVGIAEQHSVAFAGAMTNGNIIPYMCIYSTFLTRAMDQLVQDVSLMNLPVRFVIDRAGCVGPDGETHQGLFDLGYLLGLPNMDVFVPSNGQDLIDALRWMEKYDKSPVAIRFPKSSVDLKTLDFYKETELQPGTFRVFKRGTDVALISIGSMIDEAKKASERLENEGLSVTLIDLVWLRPLGAEALNEELVNVRCFVILDESYIDSGVTGYLLNRMTRENLSKYIKTFGFPPEPIHHGERKEVFQKYRLDGESIAEQVAAVLKKNLIKP.

Residues His-77 and 118–120 (GHA) contribute to the thiamine diphosphate site. Asp-149 is a Mg(2+) binding site. Thiamine diphosphate-binding positions include 150-151 (AS), Asn-178, Tyr-289, and Glu-371. Residue Asn-178 coordinates Mg(2+).

The protein belongs to the transketolase family. DXPS subfamily. In terms of assembly, homodimer. Requires Mg(2+) as cofactor. The cofactor is thiamine diphosphate.

The catalysed reaction is D-glyceraldehyde 3-phosphate + pyruvate + H(+) = 1-deoxy-D-xylulose 5-phosphate + CO2. It participates in metabolic intermediate biosynthesis; 1-deoxy-D-xylulose 5-phosphate biosynthesis; 1-deoxy-D-xylulose 5-phosphate from D-glyceraldehyde 3-phosphate and pyruvate: step 1/1. Its function is as follows. Catalyzes the acyloin condensation reaction between C atoms 2 and 3 of pyruvate and glyceraldehyde 3-phosphate to yield 1-deoxy-D-xylulose-5-phosphate (DXP). The sequence is that of 1-deoxy-D-xylulose-5-phosphate synthase from Leptospira interrogans serogroup Icterohaemorrhagiae serovar copenhageni (strain Fiocruz L1-130).